Here is a 330-residue protein sequence, read N- to C-terminus: GTPase Obg (330 aa).

The region spanning Met-1 to Leu-159 is the Obg domain. The region spanning Ala-160–Gly-328 is the OBG-type G domain. Residues Gly-166–Ser-173, Phe-191–Val-195, Asp-213–Gly-216, Asn-280–Glu-283, and Ser-309–Ala-311 each bind ATP. Ser-173 and Thr-193 together coordinate Mg(2+).

This sequence belongs to the TRAFAC class OBG-HflX-like GTPase superfamily. OBG GTPase family. As to quaternary structure, monomer. Mg(2+) is required as a cofactor.

Its subcellular location is the cytoplasm. In terms of biological role, an essential GTPase which binds GTP, GDP and possibly (p)ppGpp with moderate affinity, with high nucleotide exchange rates and a fairly low GTP hydrolysis rate. Plays a role in control of the cell cycle, stress response, ribosome biogenesis and in those bacteria that undergo differentiation, in morphogenesis control. The chain is GTPase Obg from Parasynechococcus marenigrum (strain WH8102).